Consider the following 281-residue polypeptide: MGIRKYKATTNGRRNMNGYDFAEITKTTPEKSLLAPLKHTAGRNSYGHITVRHRGGGTKRQYRIIDFKRIKDDVPATVKAIEYDPNRTANIALLVYADGTKSYIIAPKGLKVGMTVQSGPDADIKVGNALPLKNIPVGTVIHNIELKPGKGGQLARSAGASAQLLGKEEKYVLVRLSSGEVRMVLATCRATIGTVGNDEHALIIKGKAGRTRYAGQRPHVRGSVMNPNDHPHGGGEGKQPVGLPSPLSPWGKKTVGKKTRSHKARSNKFIVRGRKRGPHTR.

The tract at residues 210 to 281 (RTRYAGQRPH…RGRKRGPHTR (72 aa)) is disordered. The span at 254-281 (TVGKKTRSHKARSNKFIVRGRKRGPHTR) shows a compositional bias: basic residues.

It belongs to the universal ribosomal protein uL2 family. In terms of assembly, part of the 50S ribosomal subunit. Forms a bridge to the 30S subunit in the 70S ribosome.

One of the primary rRNA binding proteins. Required for association of the 30S and 50S subunits to form the 70S ribosome, for tRNA binding and peptide bond formation. It has been suggested to have peptidyltransferase activity; this is somewhat controversial. Makes several contacts with the 16S rRNA in the 70S ribosome. The chain is Large ribosomal subunit protein uL2 from Limosilactobacillus reuteri subsp. reuteri (strain JCM 1112) (Lactobacillus reuteri).